The sequence spans 437 residues: Protein translocase subunit SecY (437 aa).

10 helical membrane-spanning segments follow: residues L19–V39, L69–L89, V122–F142, I157–L177, G189–I209, W219–V239, V276–A296, P316–I336, G378–A398, and Q400–V420.

It belongs to the SecY/SEC61-alpha family. Component of the Sec protein translocase complex. Heterotrimer consisting of SecY, SecE and SecG subunits. The heterotrimers can form oligomers, although 1 heterotrimer is thought to be able to translocate proteins. Interacts with the ribosome. Interacts with SecDF, and other proteins may be involved. Interacts with SecA.

The protein resides in the cell membrane. The central subunit of the protein translocation channel SecYEG. Consists of two halves formed by TMs 1-5 and 6-10. These two domains form a lateral gate at the front which open onto the bilayer between TMs 2 and 7, and are clamped together by SecE at the back. The channel is closed by both a pore ring composed of hydrophobic SecY resides and a short helix (helix 2A) on the extracellular side of the membrane which forms a plug. The plug probably moves laterally to allow the channel to open. The ring and the pore may move independently. The polypeptide is Protein translocase subunit SecY (Streptomyces galbus).